A 99-amino-acid chain; its full sequence is Small ribosomal subunit protein uS19 (99 aa).

Residues 76–99 (PTRSFRGHAGGGKAEKGGSAPRKK) form a disordered region.

The protein belongs to the universal ribosomal protein uS19 family.

Its function is as follows. Protein S19 forms a complex with S13 that binds strongly to the 16S ribosomal RNA. In Pelodictyon phaeoclathratiforme (strain DSM 5477 / BU-1), this protein is Small ribosomal subunit protein uS19.